Here is a 393-residue protein sequence, read N- to C-terminus: Cytotoxic and regulatory T-cell molecule (393 aa).

The N-terminal stretch at 1 to 16 is a signal peptide; sequence MWWGALSLLFWVPVQA. The Ig-like V-type domain occupies 17–111; the sequence is AFLKMETVTV…SVKTKQVRVT (95 aa). The Extracellular segment spans residues 17–289; sequence AFLKMETVTV…HTGLARRKSG (273 aa). 2 disulfide bridges follow: Cys36–Cys96 and Cys139–Cys194. Residues Asn85 and Asn176 are each glycosylated (N-linked (GlcNAc...) asparagine). The 90-residue stretch at 119–208 folds into the Ig-like C2-type domain; the sequence is PTVEALVLRR…EGLHGRKLVA (90 aa). Residues 218-228 are compositionally biased toward acidic residues; it reads DQETSDQETSD. The interval 218-280 is disordered; sequence DQETSDQETS…GLSTEASAQH (63 aa). Over residues 229-246 the composition is skewed to low complexity; the sequence is APEQSSLSSQALQQPTST. Polar residues predominate over residues 247 to 256; that stretch reads VSMMENSSIP. The segment covering 257–267 has biased composition (basic and acidic residues); the sequence is ETDKEEKEHAT. The segment covering 270-280 has biased composition (polar residues); sequence PGLSTEASAQH. A helical transmembrane segment spans residues 290 to 310; that stretch reads ILLLTLVSFLIFILFIIVQLF. The Cytoplasmic segment spans residues 311-393; that stretch reads IMKLRKAHVV…KHSRVPESIV (83 aa). The segment at 333–356 is disordered; the sequence is ESYRSRSNNEETSSQENSSQAPQS. Low complexity predominate over residues 342 to 352; that stretch reads EETSSQENSSQ. Residues 390–393 carry the PDZ-binding motif; sequence ESIV.

It belongs to the nectin family. As to quaternary structure, monomer. May form homodimer (via Ig-like V-type domain). Interacts (via Ig-like V-type domain) with CADM1 (via Ig-like V-type domain); the interaction competes with CRTAM homodimerization and CADM1 homodimerization. Interacts (via PDZ-binding motif) with SCRIB (via PDZ domain 3); the interaction promotes CRTAM and SCRIB polarization in a subset of CD4+ T-cells. In the immune system, expression is restricted to activated class-I MHC-restricted cells, including NKT, NK and CD8+ T-cells (at protein level). Transiently expressed in activated CD8+ T-cells and a subset of activated CD4+ T-cells (at protein level). Expressed in activated intestinal T-cells, specifically intraepithelial CD4+ CD8+ T-cells, intraepithelial CD4+ T-cells and, CD8+ T-cells in the intestine epithelium, lamina propria, Peyer's Patches and mesenteric lymph nodes. Also expressed in spleen, brain and testis.

The protein resides in the cell membrane. Functionally, mediates heterophilic cell-cell adhesion which regulates the activation, differentiation and tissue retention of various T-cell subsets. Interaction with CADM1 promotes natural killer (NK) cell cytotoxicity and IFNG/interferon-gamma secretion by CD8+ T-cells in vitro as well as NK cell-mediated rejection of tumors expressing CADM1 in vivo. Regulates CD8+ T-cell proliferation in response to T-cell receptor (TCR) activation. Appears to be dispensable for CD8+ T-cell-mediated cytotoxicity. Interaction with SCRIB promotes the late phase of cellular polarization of a subset of CD4+ T-cells, which in turn regulates TCR-mediated proliferation and IFNG, IL17 and IL22 production. By interacting with CADM1 on CD8+ dendritic cells, regulates the retention of activated CD8+ T-cells within the draining lymph node. Required for the intestinal retention of intraepithelial CD4+ CD8+ T-cells and, to a lesser extent, intraepithelial and lamina propria CD8+ T-cells and CD4+ T-cells. Interaction with CADM1 promotes the adhesion to gut-associated CD103+ dendritic cells, which may facilitate the expression of gut-homing and adhesion molecules on T-cells and the conversion of CD4+ T-cells into CD4+ CD8+ T-cells. In Mus musculus (Mouse), this protein is Cytotoxic and regulatory T-cell molecule.